A 1788-amino-acid chain; its full sequence is U3 small nucleolar RNA-associated protein 10 (1788 aa).

The HEAT 1 repeat unit spans residues 585 to 622 (LDFQAVVPYAIVALSDPAKKVRRAAAELVTVLGSFYET). The disordered stretch occupies residues 884 to 905 (PATKRRRVGSSEKSVDSQSPAD). HEAT repeat units lie at residues 926–962 (AKHPELLPSLFTTLSELQHLRTVVGSELGYLQSLVLS), 1049–1086 (QTVKEVIPPLIETFRKSRRNLVASTAELLTSFVVAYEH), 1257–1294 (LSIAEFIKSVEALLDRPNVILRQKVLRALERRVDSESI), 1301–1339 (EALLAFLPQLTAVIRESDDMNYKHTAVNCVDKIAEKYGK), 1703–1740 (EHHKEINSALLKHLRSEQAAVRLAVIKCEQELTARLGE), and 1744–1781 (QSLPEMLPFISELQDDDDEVVERENRRWIVGIEETLGE).

This sequence belongs to the HEATR1/UTP10 family. As to quaternary structure, component of the ribosomal small subunit (SSU) processome.

It is found in the nucleus. The protein resides in the nucleolus. Its function is as follows. Involved in nucleolar processing of pre-18S ribosomal RNA. Involved in ribosome biosynthesis. The polypeptide is U3 small nucleolar RNA-associated protein 10 (rbg-5) (Neurospora crassa (strain ATCC 24698 / 74-OR23-1A / CBS 708.71 / DSM 1257 / FGSC 987)).